The primary structure comprises 100 residues: MPNCFSEEIAGIALTTRPLGLKHFEVKVFLVFYIITMVKIYIFLIRNKIMERSVGIKIHYRLSTNSYSINILSYTVLDYDISYEKLSSKLGEAEVQGLIM.

Residues 28–45 (VFLVFYIITMVKIYIFLI) form a helical membrane-spanning segment.

It localises to the membrane. This is an uncharacterized protein from Saccharomyces cerevisiae (strain ATCC 204508 / S288c) (Baker's yeast).